We begin with the raw amino-acid sequence, 299 residues long: Epimerase family protein SERP0438 (299 aa).

It belongs to the NAD(P)-dependent epimerase/dehydratase family. SDR39U1 subfamily.

The chain is Epimerase family protein SERP0438 from Staphylococcus epidermidis (strain ATCC 35984 / DSM 28319 / BCRC 17069 / CCUG 31568 / BM 3577 / RP62A).